Consider the following 115-residue polypeptide: Probable non-functional immunoglobulin heavy variable 8-51-1 (115 aa).

Residues 1–17 (MLVCVLLYSFRLFGIQG) form the signal peptide. A framework-1 region spans residues 18 to 42 (EAQLTESGGDLVHLEGPLRLSCAAS). The Ig-like domain maps to 19 to 115 (AQLTESGGDL…QNMAAFNCAG (97 aa)). The interval 43-50 (WFTFSIYE) is complementarity-determining-1. The framework-2 stretch occupies residues 51 to 67 (IHWVCQASGKGLEWVAV). Cysteines 55 and 113 form a disulfide. Residues 68-75 (IWRGESHQ) form a complementarity-determining-2 region. The framework-3 stretch occupies residues 76–113 (YNADYVRGRLTTSRDNTKYMLYMQMISLRTQNMAAFNC). The interval 114–115 (AG) is complementarity-determining-3.

Immunoglobulins are composed of two identical heavy chains and two identical light chains; disulfide-linked.

The protein resides in the secreted. The protein localises to the cell membrane. In terms of biological role, probable non-functional open reading frame (ORF) of V region of the variable domain of immunoglobulin heavy chains. Non-functional ORF generally cannot participate in the synthesis of a productive immunoglobulin chain due to altered V-(D)-J or switch recombination and/or splicing site (at mRNA level) and/or conserved amino acid change (protein level). Immunoglobulins, also known as antibodies, are membrane-bound or secreted glycoproteins produced by B lymphocytes. In the recognition phase of humoral immunity, the membrane-bound immunoglobulins serve as receptors which, upon binding of a specific antigen, trigger the clonal expansion and differentiation of B lymphocytes into immunoglobulins-secreting plasma cells. Secreted immunoglobulins mediate the effector phase of humoral immunity, which results in the elimination of bound antigens. The antigen binding site is formed by the variable domain of one heavy chain, together with that of its associated light chain. Thus, each immunoglobulin has two antigen binding sites with remarkable affinity for a particular antigen. The variable domains are assembled by a process called V-(D)-J rearrangement and can then be subjected to somatic hypermutations which, after exposure to antigen and selection, allow affinity maturation for a particular antigen. This Homo sapiens (Human) protein is Probable non-functional immunoglobulin heavy variable 8-51-1.